The sequence spans 449 residues: Tubulin beta chain (449 aa).

8 residues coordinate GTP: Gln-11, Glu-69, Ser-138, Gly-142, Thr-143, Gly-144, Asn-204, and Asn-226. Mg(2+) is bound at residue Glu-69. A disordered region spans residues 426–449; the sequence is QDATAEEEGEFDEEEGVMDAEGAA. Residues 429–443 show a composition bias toward acidic residues; the sequence is TAEEEGEFDEEEGVM.

This sequence belongs to the tubulin family. In terms of assembly, dimer of alpha and beta chains. A typical microtubule is a hollow water-filled tube with an outer diameter of 25 nm and an inner diameter of 15 nM. Alpha-beta heterodimers associate head-to-tail to form protofilaments running lengthwise along the microtubule wall with the beta-tubulin subunit facing the microtubule plus end conferring a structural polarity. Microtubules usually have 13 protofilaments but different protofilament numbers can be found in some organisms and specialized cells. Mg(2+) is required as a cofactor.

The protein resides in the cytoplasm. It is found in the cytoskeleton. Functionally, tubulin is the major constituent of microtubules, a cylinder consisting of laterally associated linear protofilaments composed of alpha- and beta-tubulin heterodimers. Microtubules grow by the addition of GTP-tubulin dimers to the microtubule end, where a stabilizing cap forms. Below the cap, tubulin dimers are in GDP-bound state, owing to GTPase activity of alpha-tubulin. The protein is Tubulin beta chain of Eimeria tenella (Coccidian parasite).